The primary structure comprises 205 residues: Ribosomal RNA small subunit methyltransferase G (205 aa).

S-adenosyl-L-methionine contacts are provided by residues Gly-73, Leu-78, Val-124–Glu-125, and Arg-139.

Belongs to the methyltransferase superfamily. RNA methyltransferase RsmG family.

It localises to the cytoplasm. It carries out the reaction guanosine(527) in 16S rRNA + S-adenosyl-L-methionine = N(7)-methylguanosine(527) in 16S rRNA + S-adenosyl-L-homocysteine. Specifically methylates the N7 position of guanine in position 527 of 16S rRNA. The protein is Ribosomal RNA small subunit methyltransferase G of Methylobacillus flagellatus (strain ATCC 51484 / DSM 6875 / VKM B-1610 / KT).